The primary structure comprises 382 residues: Opsin-VA (382 aa).

Over 1-35 (MELFPVAVNGVSHAEDPFSGPLTFIAPWNYKVLAT) the chain is Extracellular. Residues 36–56 (LMFVVTAASLSENFAVMLVTF) form a helical membrane-spanning segment. Over 57–67 (RFTQLRKPLNY) the chain is Cytoplasmic. A helical membrane pass occupies residues 68-88 (IIVNLSLADFLVSLTGGTISF). The Extracellular segment spans residues 89–103 (LTNYHGYFFLGKWAC). Cys-103 and Cys-180 are joined by a disulfide. The helical transmembrane segment at 104 to 124 (VLEGFAVTYFGIVALWSLAVL) threads the bilayer. The Cytoplasmic segment spans residues 125–147 (AFERFFVICRPLGNIRLRGKHAA). A helical transmembrane segment spans residues 148–168 (LGLLFVWTFSFIWTIPPVLGW). The Extracellular segment spans residues 169-193 (SSYTVSKIGTTCEPNWYSGNFHDHT). A helical membrane pass occupies residues 194 to 214 (FIIAFFITCFILPLGVIVVCY). At 215–244 (CKLIKKLRKVSNTHGRLGNARKPERQVTRM) the chain is on the cytoplasmic side. The helical transmembrane segment at 245-265 (VVVMIVAFMVAWTPYAAFSIV) threads the bilayer. Residues 266–279 (VTAHPSIHLDPRLA) lie on the Extracellular side of the membrane. Residues 280 to 300 (AAPAFFSKTAAVYNPVIYVFM) traverse the membrane as a helical segment. Residue Lys-287 is modified to N6-(retinylidene)lysine. Residues 301 to 382 (NKQFRKCLVQ…PIPENKVCPM (82 aa)) are Cytoplasmic-facing. The span at 330–346 (RQGMTNESHTGEMSTIA) shows a compositional bias: polar residues. Positions 330–371 (RQGMTNESHTGEMSTIASRIPKDGSIPEKTQEHPGERRSLAH) are disordered. Over residues 349–368 (IPKDGSIPEKTQEHPGERRS) the composition is skewed to basic and acidic residues.

It belongs to the G-protein coupled receptor 1 family. Opsin subfamily. Expressed in a subset of retinal horizontal cells as well as in retinal ganglion cells.

It localises to the membrane. The protein is Opsin-VA of Rutilus rutilus (Roach).